Here is a 909-residue protein sequence, read N- to C-terminus: Protein translocase subunit SecA (909 aa).

ATP is bound by residues Q85, 103–107 (GEGKT), and D512. A disordered region spans residues 866–899 (HETSATGGEEEINKPVVKGKKIGRNDPCPCGSGK). Zn(2+) is bound by residues C893, C895, C904, and C905.

Belongs to the SecA family. Monomer and homodimer. Part of the essential Sec protein translocation apparatus which comprises SecA, SecYEG and auxiliary proteins SecDF. Other proteins may also be involved. Zn(2+) is required as a cofactor.

It localises to the cell membrane. The protein resides in the cytoplasm. The catalysed reaction is ATP + H2O + cellular proteinSide 1 = ADP + phosphate + cellular proteinSide 2.. Part of the Sec protein translocase complex. Interacts with the SecYEG preprotein conducting channel. Has a central role in coupling the hydrolysis of ATP to the transfer of proteins into and across the cell membrane, serving as an ATP-driven molecular motor driving the stepwise translocation of polypeptide chains across the membrane. The sequence is that of Protein translocase subunit SecA from Finegoldia magna (strain ATCC 29328 / DSM 20472 / WAL 2508) (Peptostreptococcus magnus).